A 342-amino-acid chain; its full sequence is Anthranilate phosphoribosyltransferase (342 aa).

5-phospho-alpha-D-ribose 1-diphosphate is bound by residues G83, 86 to 87, T91, 93 to 96, 111 to 119, and S123; these read GD, NVST, and KHGNRSVSG. G83 lines the anthranilate pocket. Position 95 (S95) interacts with Mg(2+). Position 114 (N114) interacts with anthranilate. R169 is an anthranilate binding site. D228 and E229 together coordinate Mg(2+).

Belongs to the anthranilate phosphoribosyltransferase family. As to quaternary structure, homodimer. Requires Mg(2+) as cofactor.

The enzyme catalyses N-(5-phospho-beta-D-ribosyl)anthranilate + diphosphate = 5-phospho-alpha-D-ribose 1-diphosphate + anthranilate. The protein operates within amino-acid biosynthesis; L-tryptophan biosynthesis; L-tryptophan from chorismate: step 2/5. Catalyzes the transfer of the phosphoribosyl group of 5-phosphorylribose-1-pyrophosphate (PRPP) to anthranilate to yield N-(5'-phosphoribosyl)-anthranilate (PRA). This chain is Anthranilate phosphoribosyltransferase, found in Halorhodospira halophila (strain DSM 244 / SL1) (Ectothiorhodospira halophila (strain DSM 244 / SL1)).